Consider the following 300-residue polypeptide: Ribosomal RNA small subunit methyltransferase H (300 aa).

Residues 46–48, Asp65, Phe92, Asp107, and Gln114 each bind S-adenosyl-L-methionine; that span reads GGH.

This sequence belongs to the methyltransferase superfamily. RsmH family.

The protein resides in the cytoplasm. The catalysed reaction is cytidine(1402) in 16S rRNA + S-adenosyl-L-methionine = N(4)-methylcytidine(1402) in 16S rRNA + S-adenosyl-L-homocysteine + H(+). Its function is as follows. Specifically methylates the N4 position of cytidine in position 1402 (C1402) of 16S rRNA. This is Ribosomal RNA small subunit methyltransferase H from Prochlorococcus marinus (strain MIT 9515).